Consider the following 250-residue polypeptide: NAD(P)H-quinone oxidoreductase subunit S, chloroplastic (250 aa).

The N-terminal 48 residues, 1-48, are a transit peptide targeting the chloroplast; the sequence is MATSSITIPTIRTPIHRSKFLGQTHQFSTVNRSVFPPPKQQSKLYQVK. A Glycyl lysine isopeptide (Lys-Gly) (interchain with G-Cter in ubiquitin) cross-link involves residue K52. Composition is skewed to basic and acidic residues over residues 76–94 and 106–115; these read QRNI…NETE and VPEDGFEKEM. Disordered stretches follow at residues 76–163 and 222–250; these read QRNI…KPKA and REKG…EAAP. Residues 136-146 are compositionally biased toward pro residues; that stretch reads NPPPPPPPPPA.

In terms of assembly, part of the chloroplast NDH complex, composed of a mixture of chloroplast and nucleus encoded subunits. Component of the electron donor-binding subcomplex, at least composed of NDHS, NDHT and NDHU. Interacts with the NDH subcomplex A via the protein NDHT and NDHU. In terms of processing, arg-193 is the critical site for the high affinity binding of NDH to ferredoxin.

It localises to the plastid. The protein resides in the chloroplast thylakoid membrane. It carries out the reaction a plastoquinone + NADH + (n+1) H(+)(in) = a plastoquinol + NAD(+) + n H(+)(out). It catalyses the reaction a plastoquinone + NADPH + (n+1) H(+)(in) = a plastoquinol + NADP(+) + n H(+)(out). Functionally, NDH shuttles electrons from NAD(P)H:plastoquinone, via FMN and iron-sulfur (Fe-S) centers, to quinones in the photosynthetic chain and possibly in a chloroplast respiratory chain. The immediate electron acceptor for the enzyme in this species is believed to be plastoquinone. Couples the redox reaction to proton translocation, and thus conserves the redox energy in a proton gradient. Required for the efficient operation of ferredoxin-dependent plastoquinone reduction. Forms the electron donor-binding subcomplex in association with the NDHT and NDHU subunits. This Arabidopsis thaliana (Mouse-ear cress) protein is NAD(P)H-quinone oxidoreductase subunit S, chloroplastic.